A 62-amino-acid chain; its full sequence is uncharacterized protein (62 aa).

The signal sequence occupies residues 1–19 (MKLIILLFVVAAFVTLAMG).

This is an uncharacterized protein from Lepidoptera (butterflies and moths).